The primary structure comprises 495 residues: Alpha,alpha-trehalose-phosphate synthase [UDP-forming] 56 kDa subunit (495 aa).

Y102 and D156 together coordinate D-glucose 6-phosphate. 2 residues coordinate UDP: R293 and K298. Residues R293 and K298 each coordinate UDP-alpha-D-glucose. R331 lines the D-glucose 6-phosphate pocket. Residues I370 and 396–400 each bind UDP; that span reads LVSYE. UDP-alpha-D-glucose-binding positions include I370 and 392–400; that span reads DGMNLVSYE.

Belongs to the glycosyltransferase 20 family. In terms of assembly, the trehalose synthase complex is composed of the two catalytic subunits TPS1 and TPS2 and at least one of the two regulatory subunits TPS3 or TSL1.

Its subcellular location is the cytoplasm. The catalysed reaction is D-glucose 6-phosphate + UDP-alpha-D-glucose = alpha,alpha-trehalose 6-phosphate + UDP + H(+). It participates in carbohydrate biosynthesis. Its activity is regulated as follows. Activated by fructose 6-phosphate. Inorganic phosphate inhibits the synthase activity in the complex, but activates the synthase activity in the free monomeric form. In terms of biological role, synthase catalytic subunit of the trehalose synthase complex that catalyzes the production of trehalose from glucose-6-phosphate and UDP-alpha-D-glucose in a two step process. Can function independently of the complex. The sequence is that of Alpha,alpha-trehalose-phosphate synthase [UDP-forming] 56 kDa subunit from Saccharomyces cerevisiae (strain ATCC 204508 / S288c) (Baker's yeast).